Reading from the N-terminus, the 759-residue chain is LIM domain and actin-binding protein 1 (759 aa).

Residue Met1 is modified to N-acetylmethionine. A phosphoserine mark is found at Ser4, Ser15, and Ser55. The interval 78 to 131 (NPGLGAESHTDSLRNSSTEIRHRADHPPAEVTSHAASGAKADQEEQIHPRSRLR) is disordered. The span at 96-105 (EIRHRADHPP) shows a compositional bias: basic and acidic residues. Ser132 is modified (phosphoserine). A compositionally biased stretch (basic and acidic residues) spans 146–177 (KDGEDLKDHSTESKKMENCLGESRHEVEKSEI). Residues 146-182 (KDGEDLKDHSTESKKMENCLGESRHEVEKSEISENTD) form a disordered region. The short motif at 164–166 (CLG) is the Required for interaction with NPC1L1 element. A phosphoserine mark is found at Ala183 and Ser225. 2 disordered regions span residues 211–264 (ILRA…RLSE) and 323–381 (EKIS…AMKK). Tyr229 carries the post-translational modification Phosphotyrosine. Ser230 and Ser242 each carry phosphoserine. Positions 247 to 258 (DSEKNESRRNLE) are enriched in basic and acidic residues. Residues Ser263, Ser343, Ser350, Ser362, Ser365, Ser369, and Ser374 each carry the phosphoserine modification. The segment covering 362–376 (SPDSRASSLSESSPP) has biased composition (low complexity). In terms of domain architecture, LIM zinc-binding spans 388 to 448 (ETCVECQKTV…KPHFNQLFKS (61 aa)). Lys439 carries the post-translational modification N6-succinyllysine. At Ser490 the chain carries Phosphoserine. The segment at 493–513 (VEDAPIAKVGVLAASMEAKAS) is required for interaction with MYO5B. The interval 509-709 (EAKASSQQEK…QEPKSLNWSS (201 aa)) is disordered. 2 stretches are compositionally biased toward basic and acidic residues: residues 516–527 (QEKEDKPAETKK) and 556–567 (WPPEDEISKPEV). Polar residues predominate over residues 595–607 (ASFQSTSVKSPKT). Phosphoserine is present on residues Ser601, Ser604, Ser609, and Ser617. The span at 644 to 655 (KNGNVGKTTWQN) shows a compositional bias: polar residues. Positions 656-673 (KESKGETGKRSKEGHSLE) are enriched in basic and acidic residues. A compositionally biased stretch (acidic residues) spans 674–691 (MENENLVENGADSDEDDN). A phosphoserine mark is found at Ser686, Ser692, Ser698, Ser726, and Ser741. Positions 693–709 (FLKQQSPQEPKSLNWSS) are enriched in polar residues.

As to quaternary structure, interacts with NPC1L1; bridges NPC1L1 with MYO5B. Interacts with MYO5B; bridges NPC1L1 with MYO5B. Interacts with PXN; this complex stabilizes actin dynamics. Interacts with F-actin and G-actin. Interacts with LUZP1 (via C-terminus); both proteins restrict ciliation and may work together to regulate this process. Binds RAB40B (GTP-bound); interaction influences LIMA1 subcellular localization in lamellipodia during cell migration. In terms of processing, ubiquitinated by the ECS(RAB40B) complex leading to its degradation. Post-translationally, phosphorylation of the C-terminal region by MAPK1/MAPK3 reduces its association with F-actin and contributes to actin filament reorganization and enhances cell motility. As to expression, highly expressed in placenta, kidney, pancreas, prostate, ovary, spleen and heart. Also detected in lung, liver, brain, skeletal muscle, thymus, testis and intestine. Not detected in leukocytes. Isoform Beta expressed generally at very low levels. Isoform Alpha abundant in epithelial cells from mammary gland, prostate and in normal oral keratinocytes. Low levels in aortic endothelial cells and dermal fibroblasts. Not detectable in myocardium.

It localises to the cytoplasm. Its subcellular location is the cell junction. It is found in the focal adhesion. The protein resides in the cytoskeleton. The protein localises to the stress fiber. It localises to the cell membrane. Its subcellular location is the cell projection. It is found in the ruffle. The protein resides in the lamellipodium. Actin-binding protein involved in actin cytoskeleton regulation and dynamics. Increases the number and size of actin stress fibers and inhibits membrane ruffling. Inhibits actin filament depolymerization. Bundles actin filaments, delays filament nucleation and reduces formation of branched filaments. Acts as a negative regulator of primary cilium formation. Plays a role in cholesterol homeostasis. Influences plasma cholesterol levels through regulation of intestinal cholesterol absorption. May act as a scaffold protein by regulating NPC1L1 transportation, an essential protein for cholesterol absorption, to the plasma membrane by recruiting MYO5B to NPC1L1, and thus facilitates cholesterol uptake. This is LIM domain and actin-binding protein 1 from Homo sapiens (Human).